The chain runs to 157 residues: CAPA peptides (157 aa).

Residues 1 to 21 (MQPTMRIIVSMALLAYAVASA) form the signal peptide. Positions 22-28 (YHSNVKL) are excised as a propeptide. V42 is modified (valine amide). The propeptide occupies 45–66 (ASGNTWQLPLNDLYPEYEPAQV). Q69 carries the pyrrolidone carboxylic acid; partial modification. V76 bears the Valine amide mark. 2 positions are modified to leucine amide: L85 and L117. Positions 120–157 (AFKNDDDEITIQNESNDHSEPEQTELIHEDRRKRQTLN) are excised as a propeptide. The disordered stretch occupies residues 131–157 (QNESNDHSEPEQTELIHEDRRKRQTLN). Residues 134-151 (SNDHSEPEQTELIHEDRR) are compositionally biased toward basic and acidic residues.

This sequence belongs to the pyrokinin family. CAPA-periviscerokinin 1: Expressed in corpora cardiaca (CC), corpora allata (CA), antennal lobe (AL) and gnathal ganglion (GNG) (at protein level). Expression detected in most animals in CC and CA and in some animals in AL and GNG (at protein level). CAPA-periviscerokinin 2: Expressed in corpora cardiaca (CC), corpora allata (CA), antennal lobe (AL) and gnathal ganglion (GNG) (at protein level). For non-pyroglutamate form, expression in AL detected in all animals, in CC, CA and GNG in most animals (at protein level). For pyroglutamate form, expression in CC and CA detected in most animals, in AL and GNG in some animals (at protein level). CAPA-periviscerokinin 3: Expressed in corpora cardiaca (CC), corpora allata (CA), antennal lobe (AL) and gnathal ganglion (GNG). Expression detected in most animals in CC and CA and in some animals in AL and GNG (at protein level). CAPA-precursor-related peptide 3: Expressed in corpora cardiaca (CC), corpora allata (CA), antennal lobe (AL) and gnathal ganglion (GNG) (at protein level). Expression in CC and CA detected in some animals, expression in Al and GNG detected in few animals (at protein level). CAPA-trypto-pyrokinin: Expressed in corpora cardiaca (CC), corpora allata (CA), antennal lobe (AL) and gnathal ganglion (GNG) (at protein level). Expression in CC, CA and GNG detected in most animals, in AL in some animals (at protein level).

Its subcellular location is the secreted. In terms of biological role, myoactive. The sequence is that of CAPA peptides from Agrotis ipsilon (Black cutworm moth).